Here is a 141-residue protein sequence, read N- to C-terminus: Lutropin subunit beta (141 aa).

A signal peptide spans 1–18; sequence MGTLQGLLLWLLLGTGGA. 6 disulfide bridges follow: cysteine 29–cysteine 77, cysteine 43–cysteine 92, cysteine 46–cysteine 130, cysteine 54–cysteine 108, cysteine 58–cysteine 110, and cysteine 113–cysteine 120. Asparagine 33 is a glycosylation site (N-linked (GlcNAc...) asparagine).

The protein belongs to the glycoprotein hormones subunit beta family. In terms of assembly, heterodimer of a common alpha chain and a unique beta chain which confers biological specificity to thyrotropin, lutropin, follitropin and gonadotropin.

It localises to the secreted. Its function is as follows. Promotes spermatogenesis and ovulation by stimulating the testes and ovaries to synthesize steroids. The protein is Lutropin subunit beta (LHB) of Oryctolagus cuniculus (Rabbit).